The sequence spans 158 residues: Rhombotin-2 (158 aa).

2 LIM zinc-binding domains span residues 30 to 89 (CGGC…RLFG) and 94 to 153 (CASC…EWTK).

Interacts via its LIM domains with ELF2 and LDB1. Interacts with BEX2 and KDM5A. Also interacts with basic helix-loop-helix protein TAL1/SCL and can assemble in a complex with LMO2 and TAL1/SCL.

It is found in the nucleus. Acts with TAL1/SCL to regulate red blood cell development. Also acts with LDB1 to maintain erythroid precursors in an immature state. The protein is Rhombotin-2 (LMO2) of Bos taurus (Bovine).